A 121-amino-acid chain; its full sequence is Huntingtin-interacting protein K (121 aa).

Residues 1–13 show a composition bias toward acidic residues; that stretch reads MATEGDVELELET. The segment at 1-75 is disordered; that stretch reads MATEGDVELE…EQKAKQEREK (75 aa). Basic and acidic residues-rich tracts occupy residues 20-47 and 60-75; these read RPPE…EKEI and GDRR…EREK. Residue Ser30 is modified to Phosphoserine. Residues 52 to 121 form a required for association with the NAA10-NAA15 complex region; that stretch reads LETAMSVIGD…VVEALIALTN (70 aa). The stretch at 62–107 forms a coiled coil; the sequence is RRSREQKAKQEREKELAKVTIKKEDLELIMTEMEISRAAAERSLRE.

As to quaternary structure, component of the N-terminal acetyltransferase A (NatA)/HYPK complex at least composed of NAA10, NAA15 and HYPK, which has N-terminal acetyltransferase activity. Within the complex interacts with NAA10. Within the complex interacts with NAA15. Predominantly interacts with NAA15 in the NAA10-NAA15 complex (also called the NatA complex); the interaction with the NatA complex reduces the acetylation activity of the NatA complex. Interacts with HTT (via N-terminus). The NatA complex is required for HYPK stability and for reducing polyQ aggregation of HTT. Component of the N-terminal acetyltransferase E (NatE)/HYPK complex at least composed of NAA10, NAA15, NAA50 and HYPK. Within the complex interacts with NAA10 and NAA15. Does not interact with NAA50. Interaction with NAA15 reduces the capacity of NAA15 to interact with NAA50. Its capacity to interact with the NatA complex is reduced by NAA50. Does not interact with the N-terminal acetyltransferase B (NatB) complex component NAA25 or the N-terminal acetyltransferase C (NatC) complex component NAA35.

It is found in the nucleus. It localises to the cytoplasm. Its function is as follows. Component of several N-terminal acetyltransferase complexes. Inhibits the N-terminal acetylation activity of the N-terminal acetyltransferase NAA10-NAA15 complex (also called the NatA complex). Has chaperone-like activity preventing polyglutamine (polyQ) aggregation of HTT in neuronal cells probably while associated with the NatA complex. May play a role in the NatA complex-mediated N-terminal acetylation of PCNP. The sequence is that of Huntingtin-interacting protein K from Homo sapiens (Human).